Consider the following 234-residue polypeptide: Uridylate kinase (234 aa).

Gly-10–Ser-11 is an ATP binding site. Position 44 (Gly-44) interacts with UMP. ATP is bound by residues Gly-45 and Arg-49. UMP is bound by residues Asp-66 and Ile-114–Thr-120. ATP is bound by residues Thr-140, Tyr-146, and Asp-149.

Belongs to the UMP kinase family. In terms of assembly, homohexamer.

It localises to the cytoplasm. It carries out the reaction UMP + ATP = UDP + ADP. It participates in pyrimidine metabolism; CTP biosynthesis via de novo pathway; UDP from UMP (UMPK route): step 1/1. Its activity is regulated as follows. Inhibited by UTP. Catalyzes the reversible phosphorylation of UMP to UDP. This is Uridylate kinase from Methanoculleus marisnigri (strain ATCC 35101 / DSM 1498 / JR1).